The chain runs to 266 residues: Killer cell lectin-like receptor 8 (266 aa).

Residues 1 to 44 lie on the Cytoplasmic side of the membrane; it reads MSEQEVTFPTMRFHKSSGLNSQVRLEGTQRSRKAGLRVCSVPWQ. A helical; Signal-anchor for type II membrane protein transmembrane segment spans residues 45-66; it reads LIVIALGILCSLRLVIVAVFVT. Topologically, residues 67–266 are extracellular; sequence KFFQYSQHKQ…CGKKLDKFPD (200 aa). N-linked (GlcNAc...) asparagine glycosylation is found at Asn87 and Asn104. The C-type lectin domain occupies 143 to 261; sequence GVKYWFCYGT…PYYCICGKKL (119 aa). 4 disulfides stabilise this stretch: Cys149-Cys154, Cys167-Cys255, Cys171-Cys257, and Cys236-Cys249.

In terms of assembly, homodimer; disulfide-linked. Interacts with the adapter protein TYROBP/DAP12; the interaction leads to natural killer cell activation.

It localises to the cell membrane. Functionally, receptor on natural killer (NK) cells for class I MHC. The sequence is that of Killer cell lectin-like receptor 8 (Klra8) from Mus musculus (Mouse).